A 276-amino-acid polypeptide reads, in one-letter code: Shikimate dehydrogenase (NADP(+)) (276 aa).

Shikimate is bound by residues 15–17 (SLS) and T62. Catalysis depends on K66, which acts as the Proton acceptor. Position 78 (E78) interacts with NADP(+). Shikimate contacts are provided by N87 and D102. NADP(+)-binding positions include 151–156 (NRTVEK) and I218. Shikimate is bound at residue Y220. G241 provides a ligand contact to NADP(+).

This sequence belongs to the shikimate dehydrogenase family. In terms of assembly, homodimer.

It carries out the reaction shikimate + NADP(+) = 3-dehydroshikimate + NADPH + H(+). It participates in metabolic intermediate biosynthesis; chorismate biosynthesis; chorismate from D-erythrose 4-phosphate and phosphoenolpyruvate: step 4/7. Its function is as follows. Involved in the biosynthesis of the chorismate, which leads to the biosynthesis of aromatic amino acids. Catalyzes the reversible NADPH linked reduction of 3-dehydroshikimate (DHSA) to yield shikimate (SA). The protein is Shikimate dehydrogenase (NADP(+)) of Geobacillus kaustophilus (strain HTA426).